Consider the following 352-residue polypeptide: Phospho-N-acetylmuramoyl-pentapeptide-transferase (352 aa).

Helical transmembrane passes span 16 to 36 (YITFRAGAAFFIAFFLALLFM), 66 to 86 (TPTMGGLVFIGATLLASLLCA), 88 to 108 (LNNLYVLAGLAVILLFGLIGL), 129 to 149 (MLYLVLAGASVSAALFYFGME), 160 to 180 (PLLSMGIVAILFWTLVMVATS), 191 to 211 (GLATVPSVYALVSLSVFVYIA), 228 to 248 (SGEAVIVSAALVGALIGFLWF), 255 to 275 (LFMGDSGSLSIGGFIAYMAII), 280 to 300 (FLLFLIGSIFVIETVSVILQI), and 329 to 349 (KIIVRFWIIALMSNIIALLTL).

This sequence belongs to the glycosyltransferase 4 family. MraY subfamily. Mg(2+) is required as a cofactor.

Its subcellular location is the cell inner membrane. It carries out the reaction UDP-N-acetyl-alpha-D-muramoyl-L-alanyl-gamma-D-glutamyl-meso-2,6-diaminopimeloyl-D-alanyl-D-alanine + di-trans,octa-cis-undecaprenyl phosphate = di-trans,octa-cis-undecaprenyl diphospho-N-acetyl-alpha-D-muramoyl-L-alanyl-D-glutamyl-meso-2,6-diaminopimeloyl-D-alanyl-D-alanine + UMP. It functions in the pathway cell wall biogenesis; peptidoglycan biosynthesis. Catalyzes the initial step of the lipid cycle reactions in the biosynthesis of the cell wall peptidoglycan: transfers peptidoglycan precursor phospho-MurNAc-pentapeptide from UDP-MurNAc-pentapeptide onto the lipid carrier undecaprenyl phosphate, yielding undecaprenyl-pyrophosphoryl-MurNAc-pentapeptide, known as lipid I. This is Phospho-N-acetylmuramoyl-pentapeptide-transferase from Wolinella succinogenes (strain ATCC 29543 / DSM 1740 / CCUG 13145 / JCM 31913 / LMG 7466 / NCTC 11488 / FDC 602W) (Vibrio succinogenes).